The following is a 208-amino-acid chain: Protein DEHYDRATION-INDUCED 19 homolog 6 (208 aa).

Residues 151 to 190 (VDSPRRSEADAEGHGSSSSDDQKRREQGVMDDASKEELEE) form a disordered region. Basic and acidic residues-rich tracts occupy residues 153–163 (SPRRSEADAEG) and 170–190 (DDQKRREQGVMDDASKEELEE).

Belongs to the Di19 family.

The protein is Protein DEHYDRATION-INDUCED 19 homolog 6 (DI19-6) of Oryza sativa subsp. japonica (Rice).